The chain runs to 459 residues: Putrescine aminotransferase (459 aa).

Residues 150–151 and glutamine 274 contribute to the pyridoxal 5'-phosphate site; that span reads GT. Residue lysine 300 is modified to N6-(pyridoxal phosphate)lysine. Residue threonine 332 participates in pyridoxal 5'-phosphate binding.

Belongs to the class-III pyridoxal-phosphate-dependent aminotransferase family. Putrescine aminotransferase subfamily. The cofactor is pyridoxal 5'-phosphate.

The enzyme catalyses an alkane-alpha,omega-diamine + 2-oxoglutarate = an omega-aminoaldehyde + L-glutamate. The catalysed reaction is putrescine + 2-oxoglutarate = 1-pyrroline + L-glutamate + H2O. It catalyses the reaction cadaverine + 2-oxoglutarate = 5-aminopentanal + L-glutamate. Its pathway is amine and polyamine degradation; putrescine degradation; 4-aminobutanal from putrescine (transaminase route): step 1/1. In terms of biological role, catalyzes the aminotransferase reaction from putrescine to 2-oxoglutarate, leading to glutamate and 4-aminobutanal, which spontaneously cyclizes to form 1-pyrroline. This is the first step in one of two pathways for putrescine degradation, where putrescine is converted into 4-aminobutanoate (gamma-aminobutyrate or GABA) via 4-aminobutanal. Also functions as a cadaverine transaminase in a a L-lysine degradation pathway to succinate that proceeds via cadaverine, glutarate and L-2-hydroxyglutarate. The protein is Putrescine aminotransferase of Escherichia coli O17:K52:H18 (strain UMN026 / ExPEC).